We begin with the raw amino-acid sequence, 497 residues long: Methionine--tRNA ligase (497 aa).

A 'HIGH' region motif is present at residues 14 to 24 (YYVNDVPHLGH). Cys-129, Cys-132, Cys-147, and His-150 together coordinate Zn(2+). Residues 295–299 (KMSKT) carry the 'KMSKS' region motif. Lys-298 is an ATP binding site.

The protein belongs to the class-I aminoacyl-tRNA synthetase family. MetG type 2A subfamily. As to quaternary structure, monomer. It depends on Zn(2+) as a cofactor.

The protein localises to the cytoplasm. It carries out the reaction tRNA(Met) + L-methionine + ATP = L-methionyl-tRNA(Met) + AMP + diphosphate. Functionally, is required not only for elongation of protein synthesis but also for the initiation of all mRNA translation through initiator tRNA(fMet) aminoacylation. The protein is Methionine--tRNA ligase (metG) of Aquifex aeolicus (strain VF5).